A 198-amino-acid polypeptide reads, in one-letter code: Protein GrpE (198 aa).

This sequence belongs to the GrpE family. As to quaternary structure, homodimer.

It is found in the cytoplasm. Its function is as follows. Participates actively in the response to hyperosmotic and heat shock by preventing the aggregation of stress-denatured proteins, in association with DnaK and GrpE. It is the nucleotide exchange factor for DnaK and may function as a thermosensor. Unfolded proteins bind initially to DnaJ; upon interaction with the DnaJ-bound protein, DnaK hydrolyzes its bound ATP, resulting in the formation of a stable complex. GrpE releases ADP from DnaK; ATP binding to DnaK triggers the release of the substrate protein, thus completing the reaction cycle. Several rounds of ATP-dependent interactions between DnaJ, DnaK and GrpE are required for fully efficient folding. This Actinobacillus pleuropneumoniae serotype 7 (strain AP76) protein is Protein GrpE.